Consider the following 463-residue polypeptide: Succinate--CoA ligase [ADP-forming] subunit beta, mitochondrial (463 aa).

A mitochondrion-targeting transit peptide spans 1 to 53; sequence MAASVFYGRLLAVATLRNHRPRTALGAAAQVLGSSGLFNNHGLQVQQQQQRNL. The 228-residue stretch at 61-288 folds into the ATP-grasp domain; the sequence is MELLQEAGVS…SNSAYRQKKI (228 aa). Lysine 78 bears the N6-acetyllysine mark. Phosphotyrosine is present on tyrosine 84. Residue lysine 88 is modified to N6-acetyllysine; alternate. At lysine 88 the chain carries N6-succinyllysine; alternate. Residues lysine 98 and 105 to 107 each bind ATP; that span reads GRG. N6-acetyllysine is present on residues lysine 129, lysine 139, lysine 143, and lysine 216. Residues asparagine 258 and aspartate 272 each contribute to the Mg(2+) site. A Phosphoserine modification is found at serine 279. Asparagine 323 lines the substrate pocket. A Phosphothreonine modification is found at threonine 341. An N6-acetyllysine modification is found at lysine 368. 380–382 provides a ligand contact to substrate; sequence GIM.

The protein belongs to the succinate/malate CoA ligase beta subunit family. ATP-specific subunit beta subfamily. As to quaternary structure, heterodimer of an alpha and a beta subunit. The beta subunit determines specificity for ATP. Interacts with ALAS2. The cofactor is Mg(2+).

The protein resides in the mitochondrion. The enzyme catalyses succinate + ATP + CoA = succinyl-CoA + ADP + phosphate. Its pathway is carbohydrate metabolism; tricarboxylic acid cycle; succinate from succinyl-CoA (ligase route): step 1/1. Its function is as follows. ATP-specific succinyl-CoA synthetase functions in the citric acid cycle (TCA), coupling the hydrolysis of succinyl-CoA to the synthesis of ATP and thus represents the only step of substrate-level phosphorylation in the TCA. The beta subunit provides nucleotide specificity of the enzyme and binds the substrate succinate, while the binding sites for coenzyme A and phosphate are found in the alpha subunit. In Macaca fascicularis (Crab-eating macaque), this protein is Succinate--CoA ligase [ADP-forming] subunit beta, mitochondrial.